A 317-amino-acid chain; its full sequence is NF-kappa-B inhibitor alpha (317 aa).

The disordered stretch occupies residues Met1–Asp39. Positions Gly15 to Asp39 are enriched in basic and acidic residues. Residue Lys21 forms a Glycyl lysine isopeptide (Lys-Gly) (interchain with G-Cter in SUMO); alternate linkage. A Glycyl lysine isopeptide (Lys-Gly) (interchain with G-Cter in ubiquitin); alternate cross-link involves residue Lys21. Residue Lys22 forms a Glycyl lysine isopeptide (Lys-Gly) (interchain with G-Cter in ubiquitin) linkage. The Destruction motif motif lies at His30–Ser36. Position 32 is a phosphoserine; by IKKA and IKKE (Ser32). Ser36 carries the post-translational modification Phosphoserine; by IKKA, IKKB, IKKE and TBK1. Tyr42 is subject to Phosphotyrosine; by Tyr-kinases. A Nuclear export signal motif is present at residues Met45–Leu54. 5 ANK repeats span residues Asp73–Phe103, Leu110–Leu139, Arg143–Leu172, Asn182–Ala211, and Asn216–Arg245. The short motif at Leu110–Ile120 is the Nuclear import signal element. A (3S)-3-hydroxyasparagine; by HIF1AN; partial mark is found at Asn210 and Asn244. Residues Ser283 and Ser288 each carry the phosphoserine; by CK2 modification. Thr291 is subject to Phosphothreonine; by CK2. A Phosphoserine; by CK2 modification is found at Ser293. A Phosphothreonine; by CK2 modification is found at Thr299.

Belongs to the NF-kappa-B inhibitor family. Interacts with RELA; the interaction requires the nuclear import signal. Part of a 70-90 kDa complex at least consisting of CHUK, IKBKB, NFKBIA, RELA, ELP1 and MAP3K14. Interacts with NKIRAS1 and NKIRAS2. Interacts with isoform 1 and isoform 2 of RWDD3; the interaction enhances sumoylation. Interacts with PRMT2. Interacts with PRKACA in platelets; this interaction is disrupted by thrombin and collagen. Interacts with MEFV. Interacts with DDRGK1; positively regulates NFKBIA phosphorylation and degradation. Interacts with HNRNPA2B1; the interaction may be mediated by the RRM2 domain of HNRNPA2B1, and HNRNPA2B1 may interact simultaneously with FAM76B and either NFKBIA or NFKBIE to form a complex. As to quaternary structure, (Microbial infection) Interacts with HBV protein X. Post-translationally, phosphorylated at Ser-32 and Ser-36 by IKKA/CHUK and IKKB/IKBKB; disables inhibition of NF-kappa-B DNA-binding activity. Phosphorylation at positions 32 and 36 is prerequisite to recognition by the SCF(FBXW11) and SCF(BTRC) complexes, leading to polyubiquitination and subsequent degradation. Phosphorylated at Ser-32 in response to FK506 treatment: phosphorylation is independent of IKKA/CHUK and IKKB/IKBKB and promotes NFKBIA degradation, followed by NF-kappa-B activation. Phosphorylated at Tyr-42: its effect is however unclear. According to a report, phosphorylation at Tyr-42 activates NF-kappa-B without triggering proteolytic degradation of NFKBIA. According to another publication, phosphorylation at Tyr-42 inhibits NF-kappa-B activity by preventing phosphorylation at Ser-32 and Ser-36 and subsequent ubiquitination and degradation. In terms of processing, polyubiquitinated at Lys-21 and/or Lys-22 following phosphorylation at Ser-32 and Ser-36. Monoubiquitinated at Lys-21 and/or Lys-22 by UBE2D3. Ubiquitin chain elongation is then performed by CDC34 in cooperation with the SCF(FBXW11) E3 ligase complex, building ubiquitin chains from the UBE2D3-primed NFKBIA-linked ubiquitin. The resulting polyubiquitination leads to protein degradation. Also ubiquitinated by the SCF(BTRC) complex following stimulus-dependent phosphorylation at Ser-32 and Ser-36. Deubiquitinated by USP38, leading to NF-kappa-B inhibition. Sumoylated; sumoylation requires the presence of the nuclear import signal. Sumoylation blocks ubiquitination and proteasome-mediated degradation of the protein thereby increasing the protein stability. Post-translationally, hydroxylated by HIF1AN. In terms of processing, (Microbial infection) Deubiquitinated by porcine reproductive and respiratory syndrome virus Nsp2 protein, which thereby interferes with NFKBIA degradation and impairs subsequent NF-kappa-B activation.

It localises to the cytoplasm. The protein resides in the nucleus. In terms of biological role, inhibits the activity of dimeric NF-kappa-B/REL complexes by trapping REL (RELA/p65 and NFKB1/p50) dimers in the cytoplasm by masking their nuclear localization signals. On cellular stimulation by immune and pro-inflammatory responses, becomes phosphorylated promoting ubiquitination and degradation, enabling the dimeric RELA to translocate to the nucleus and activate transcription. In Homo sapiens (Human), this protein is NF-kappa-B inhibitor alpha (NFKBIA).